We begin with the raw amino-acid sequence, 305 residues long: Beta-lactamase (305 aa).

The segment at residues 1-34 (MGTTGARPSRRAVLTAAAGAAVAGIPLGGSTAFA) is a signal peptide (tat-type signal). Ser82 functions as the Acyl-ester intermediate in the catalytic mechanism. Residue 250-252 (KTG) coordinates substrate.

Belongs to the class-A beta-lactamase family. In terms of processing, predicted to be exported by the Tat system. The position of the signal peptide cleavage has not been experimentally proven.

It catalyses the reaction a beta-lactam + H2O = a substituted beta-amino acid. The protein is Beta-lactamase of Streptomyces lavendulae.